A 66-amino-acid polypeptide reads, in one-letter code: Large ribosomal subunit protein bL35 (66 aa).

Belongs to the bacterial ribosomal protein bL35 family.

The protein is Large ribosomal subunit protein bL35 of Brucella canis (strain ATCC 23365 / NCTC 10854 / RM-666).